A 103-amino-acid chain; its full sequence is Cell division protein FtsB (103 aa).

Residues 1–3 (MGK) lie on the Cytoplasmic side of the membrane. The helical transmembrane segment at 4-21 (LTLLLLAILVWLQYSLWF) threads the bilayer. Residues 22-103 (GKNGIHDYTR…RAQSAGQNNR (82 aa)) lie on the Periplasmic side of the membrane. The stretch at 31 to 71 (RVNDDVAAQQATNAKLKARNDQLFAEIDDLNGGQEALEERA) forms a coiled coil.

Belongs to the FtsB family. Part of a complex composed of FtsB, FtsL and FtsQ.

The protein localises to the cell inner membrane. Its function is as follows. Essential cell division protein. May link together the upstream cell division proteins, which are predominantly cytoplasmic, with the downstream cell division proteins, which are predominantly periplasmic. This Shigella boydii serotype 18 (strain CDC 3083-94 / BS512) protein is Cell division protein FtsB.